A 44-amino-acid chain; its full sequence is uncharacterized protein (44 aa).

It localises to the plastid. The protein resides in the chloroplast. This is an uncharacterized protein from Trieres chinensis (Marine centric diatom).